A 266-amino-acid chain; its full sequence is Zinc transport system ATP-binding protein TroB (266 aa).

One can recognise an ABC transporter domain in the interval 11-243 (VQVDDLTLAY…YVQRAYGGRI (233 aa)). 43 to 50 (GPNGAGKS) is an ATP binding site.

The protein belongs to the ABC transporter superfamily.

Part of an ATP-driven transport system TroABCD for zinc. This Treponema pallidum (strain Nichols) protein is Zinc transport system ATP-binding protein TroB (troB).